Here is a 203-residue protein sequence, read N- to C-terminus: N-(5'-phosphoribosyl)anthranilate isomerase (203 aa).

Belongs to the TrpF family.

The catalysed reaction is N-(5-phospho-beta-D-ribosyl)anthranilate = 1-(2-carboxyphenylamino)-1-deoxy-D-ribulose 5-phosphate. It functions in the pathway amino-acid biosynthesis; L-tryptophan biosynthesis; L-tryptophan from chorismate: step 3/5. This Geobacter sulfurreducens (strain ATCC 51573 / DSM 12127 / PCA) protein is N-(5'-phosphoribosyl)anthranilate isomerase.